The chain runs to 149 residues: Ribonuclease pancreatic (149 aa).

A signal peptide spans methionine 1–alanine 25. Residues lysine 32 and arginine 35 each coordinate substrate. The active-site Proton acceptor is histidine 37. 4 disulfide bridges follow: cysteine 51/cysteine 109, cysteine 65/cysteine 120, cysteine 83/cysteine 135, and cysteine 90/cysteine 97. Residues lysine 66–threonine 70, lysine 91, and arginine 110 contribute to the substrate site. Histidine 144 functions as the Proton donor in the catalytic mechanism.

It belongs to the pancreatic ribonuclease family. As to quaternary structure, monomer. Interacts with and forms tight 1:1 complexes with RNH1. Dimerization of two such complexes may occur. Interaction with RNH1 inhibits this protein. As to expression, pancreas.

It localises to the secreted. The enzyme catalyses an [RNA] containing cytidine + H2O = an [RNA]-3'-cytidine-3'-phosphate + a 5'-hydroxy-ribonucleotide-3'-[RNA].. It carries out the reaction an [RNA] containing uridine + H2O = an [RNA]-3'-uridine-3'-phosphate + a 5'-hydroxy-ribonucleotide-3'-[RNA].. In terms of biological role, endonuclease that catalyzes the cleavage of RNA on the 3' side of pyrimidine nucleotides. Acts on single-stranded and double-stranded RNA. The protein is Ribonuclease pancreatic (RNASE1) of Uranomys ruddi (White-bellied brush-furred rat).